We begin with the raw amino-acid sequence, 820 residues long: Sucrose synthase 2 (820 aa).

The segment at 276-753 (MVFNVVILSP…GLKRIYEKYT (478 aa)) is GT-B glycosyltransferase.

The protein belongs to the glycosyltransferase 1 family. Plant sucrose synthase subfamily.

It catalyses the reaction an NDP-alpha-D-glucose + D-fructose = a ribonucleoside 5'-diphosphate + sucrose + H(+). In terms of biological role, sucrose-cleaving enzyme that provides UDP-glucose and fructose for various metabolic pathways. The protein is Sucrose synthase 2 of Tulipa gesneriana (Garden tulip).